A 277-amino-acid chain; its full sequence is Putative ankyrin repeat protein L81 (277 aa).

ANK repeat units follow at residues 150–179 (FGQT…DLHQ) and 183–215 (QGRS…DLYQ).

The polypeptide is Putative ankyrin repeat protein L81 (Acanthamoeba polyphaga (Amoeba)).